The chain runs to 2587 residues: Protein KINKY POLLEN (2587 aa).

The signal sequence occupies residues 1–27; the sequence is MAAFLVMFIFTIALFVALLWVFFKSLP. A glycan (N-linked (GlcNAc...) asparagine) is linked at Asn-71. The interval 103-124 is disordered; that stretch reads PSHSSKGPRKPKTRKSSSGGKG. Positions 108–117 are enriched in basic residues; the sequence is KGPRKPKTRK. Residues Asn-262, Asn-281, and Asn-485 are each glycosylated (N-linked (GlcNAc...) asparagine). A disordered region spans residues 270–290; sequence SKGEVIDSSSGNTTSEKPPKQ. Over residues 276–285 the composition is skewed to polar residues; that stretch reads DSSSGNTTSE. The segment at 589–611 is disordered; sequence GSSSKNKQEKGAHRSKPPSGRGT. Residues 691-716 adopt a coiled-coil conformation; it reads TLNKEIQSTQVELETAKAIYQEFLEE. The interval 784-814 is disordered; sequence QHGNRNPEEASTVTGDKQKEEPTTTPNSLDK. N-linked (GlcNAc...) asparagine glycosylation is found at Asn-1155, Asn-1250, Asn-1281, and Asn-1486. Disordered stretches follow at residues 1571–1608, 1646–1673, and 1729–1797; these read HCSK…KHPD, VDAR…DGYN, and EGNQ…PEEE. Polar residues predominate over residues 1576–1590; the sequence is AQMSRTSSLSGSTDR. Asn-1595 carries N-linked (GlcNAc...) asparagine glycosylation. Positions 1646–1666 are enriched in basic and acidic residues; it reads VDARSTKEKQSEPEENSHSDP. A compositionally biased stretch (polar residues) spans 1746 to 1760; sequence KQPSTGSGNLASQSK. N-linked (GlcNAc...) asparagine glycosylation is found at Asn-1861, Asn-1951, Asn-1981, Asn-2036, and Asn-2278. A coiled-coil region spans residues 2006–2036; sequence IEEVELAKIELEAKERDRMMLLDDIRKLTQN. Over residues 2274–2287 the composition is skewed to polar residues; the sequence is QGSKNQSLKSSTIR. Disordered stretches follow at residues 2274–2299, 2319–2360, and 2442–2469; these read QGSK…TSSF, SMEH…KKSR, and KDDI…RPGD. Basic and acidic residues-rich tracts occupy residues 2289–2299, 2322–2336, 2343–2359, and 2442–2458; these read SGRELRRTSSF, HQGE…DSKT, SVHE…DKKS, and KDDI…RTDQ. N-linked (GlcNAc...) asparagine glycans are attached at residues Asn-2513 and Asn-2544. The disordered stretch occupies residues 2533–2587; sequence IRRHSKKFQNQNTTKGSKKTQLSPTLSPPKEEDQYESDSSSGSSAYEEFLDQNQI. Polar residues predominate over residues 2540–2557; that stretch reads FQNQNTTKGSKKTQLSPT. Residues 2569–2579 are compositionally biased toward low complexity; sequence SDSSSGSSAYE.

It belongs to the SABRE family. As to expression, mostly expressed in pollen and roots, especially in tip-growing cells, but also present in seedlings, stems, leaves, buds, flowers, siliques and seeds.

It localises to the secreted. Its subcellular location is the golgi apparatus. In terms of biological role, may be involved in membrane trafficking. Required for tip growth in pollen tubes and root hairs. The chain is Protein KINKY POLLEN from Arabidopsis thaliana (Mouse-ear cress).